A 405-amino-acid chain; its full sequence is Argininosuccinate synthase (405 aa).

ATP is bound by residues 10–18 (AYSGGLDTS) and alanine 37. The L-citrulline site is built by tyrosine 88 and serine 93. Position 118 (glycine 118) interacts with ATP. Residues threonine 120, asparagine 124, and aspartate 125 each contribute to the L-aspartate site. Asparagine 124 provides a ligand contact to L-citrulline. L-citrulline contacts are provided by arginine 128, serine 179, serine 188, glutamate 264, and tyrosine 276.

The protein belongs to the argininosuccinate synthase family. Type 1 subfamily. In terms of assembly, homotetramer.

The protein localises to the cytoplasm. The catalysed reaction is L-citrulline + L-aspartate + ATP = 2-(N(omega)-L-arginino)succinate + AMP + diphosphate + H(+). The protein operates within amino-acid biosynthesis; L-arginine biosynthesis; L-arginine from L-ornithine and carbamoyl phosphate: step 2/3. The polypeptide is Argininosuccinate synthase (Ectopseudomonas mendocina (strain ymp) (Pseudomonas mendocina)).